Consider the following 155-residue polypeptide: Regulatory protein RecX (155 aa).

The protein belongs to the RecX family.

The protein localises to the cytoplasm. Its function is as follows. Modulates RecA activity. This is Regulatory protein RecX from Vibrio parahaemolyticus serotype O3:K6 (strain RIMD 2210633).